The primary structure comprises 231 residues: Protein INCA1 (231 aa).

The interaction with CCNA1 and CCNA1/CDK2 complex; essential for CDK2 inhibitory activity stretch occupies residues 75-99 (SLHPLEGLPPPEKLWRRKRKKLHLE). Residues 90–95 (RRKRKK) carry the Nuclear localization signal motif. Thr180 carries the phosphothreonine modification.

Belongs to the INCA family. Interacts with CCNA1. Identified in a complex with CCNA1 and CDK2. Interacts with ZNF16; the interaction inhibits INCA1 activity and induces the cell cycle process. Interacts with SPACA9. Interacts with CCNA2, CCNB1 and CCNE1. Interacts with the CCNA1/CDK2 complex. Interacts with ING5, DAZAP2, RNF26, USP15, SPOUT1, DPH7, TRIM26 and RAB5C. Phosphorylated when part of a complex with CCNA1 and CDK2.

It is found in the nucleus. The protein localises to the cytoplasm. In terms of biological role, binds to CDK2-bound cyclins and inhibits the kinase activity of CDK2; binding to cyclins is critical for its function as CDK inhibitor. Inhibits cell growth and proliferation and may play a role in cell cycle control. Required for ING5-mediated regulation of S-phase progression, enhancement of Fas-induced apoptosis and inhibition of cell growth. This is Protein INCA1 (Inca1) from Mus musculus (Mouse).